We begin with the raw amino-acid sequence, 406 residues long: Arginine biosynthesis bifunctional protein ArgJ (406 aa).

6 residues coordinate substrate: T152, K179, T190, E277, N401, and S406. Residue T190 is the Nucleophile of the active site.

The protein belongs to the ArgJ family. As to quaternary structure, heterotetramer of two alpha and two beta chains.

It localises to the cytoplasm. The enzyme catalyses N(2)-acetyl-L-ornithine + L-glutamate = N-acetyl-L-glutamate + L-ornithine. It carries out the reaction L-glutamate + acetyl-CoA = N-acetyl-L-glutamate + CoA + H(+). It participates in amino-acid biosynthesis; L-arginine biosynthesis; L-ornithine and N-acetyl-L-glutamate from L-glutamate and N(2)-acetyl-L-ornithine (cyclic): step 1/1. The protein operates within amino-acid biosynthesis; L-arginine biosynthesis; N(2)-acetyl-L-ornithine from L-glutamate: step 1/4. Functionally, catalyzes two activities which are involved in the cyclic version of arginine biosynthesis: the synthesis of N-acetylglutamate from glutamate and acetyl-CoA as the acetyl donor, and of ornithine by transacetylation between N(2)-acetylornithine and glutamate. The chain is Arginine biosynthesis bifunctional protein ArgJ from Neisseria gonorrhoeae.